The sequence spans 290 residues: MSSPKFDSYDWENDPNWKEFTGTSTSINKLKEEYFKKNIDPNYKSSNNTTTQRPSTSSSSRTSSSSTSSPRATRAKPTFRRFLYGAWVIAQISVILFTLFYFISGNPYFFYKALLGATIAYSIPIFNTFEGRKPDRALAAQLVQDENAQFVFYCMIFYFFGSSSLVYLLPNFIYSFFHMLKIVIPYTSSVPFIKNLLEKVNSTNAKAIDFAISVEINIVLIAFFGIFSSFSNILLVFIYFRYLKLRYQFSQKIKSKINEYSQMVDQLSAHPSCPTFIRNIIPKIKMVLSR.

Disordered regions lie at residues 1–22 (MSSPKFDSYDWENDPNWKEFTG) and 39–72 (IDPNYKSSNNTTTQRPSTSSSSRTSSSSTSSPRA). Low complexity predominate over residues 45–72 (SSNNTTTQRPSTSSSSRTSSSSTSSPRA). A run of 4 helical transmembrane segments spans residues 83–103 (LYGAWVIAQISVILFTLFYFI), 109–129 (FFYKALLGATIAYSIPIFNTF), 150–170 (FVFYCMIFYFFGSSSLVYLLP), and 218–238 (IVLIAFFGIFSSFSNILLVFI).

It belongs to the PER33/POM33 family.

It is found in the membrane. The polypeptide is Transmembrane protein 33 homolog (tmem33) (Dictyostelium discoideum (Social amoeba)).